Here is a 1064-residue protein sequence, read N- to C-terminus: Adenylate cyclase type 4 (1064 aa).

At 1 to 28 (MARLFSPRPPPSEDLFYETYYSLSQQYP) the chain is on the cytoplasmic side. 6 helical membrane-spanning segments follow: residues 29–50 (LLIL…VAWA), 61–80 (FLTT…GLAS), 94–117 (GLIW…VSAW), 120–138 (VSFF…PLGM), 141–162 (AAAA…YLGW), and 170–190 (LLPQ…VGAY). Residues 191–582 (HKALMERALR…YRLSALPAFK (392 aa)) are Cytoplasmic-facing. Positions 278, 279, and 322 each coordinate Mg(2+). ATP contacts are provided by residues 278–283 (DIVGFT), 320–322 (LGD), and Arg366. Residues 498–523 (DSPASTSTPLPEKAFSPQWSLDRSRT) are disordered. The residue at position 517 (Ser517) is a Phosphoserine. Phosphothreonine is present on Thr533. Transmembrane regions (helical) follow at residues 583-604 (YYAA…LVTT), 608-630 (ALAT…CFSE), and 661-684 (VALG…FLPV). Topologically, residues 685–707 (SSDCPFLAPNVSSVAFNTSWELP) are extracellular. Residues Asn694 and Asn701 are each glycosylated (N-linked (GlcNAc...) asparagine). Transmembrane regions (helical) follow at residues 708–733 (ASLP…SLFL), 741–761 (LLLL…SHAW), and 788–804 (MGAI…LVLA). Residues 805-1064 (RQNEYYCRLD…LTRTGSPSAS (260 aa)) are Cytoplasmic-facing. Residues Lys914, 994-996 (DIW), 1001-1005 (NVASR), and Lys1041 each bind ATP.

Belongs to the adenylyl cyclase class-4/guanylyl cyclase family. Mg(2+) serves as cofactor. Requires Mn(2+) as cofactor. Widely distributed.

It is found in the cell membrane. The protein resides in the cytoplasm. The enzyme catalyses ATP = 3',5'-cyclic AMP + diphosphate. With respect to regulation, activated by forskolin. Insensitive to calcium/calmodulin. Stimulated by GNAS and by the G-protein beta and gamma subunit complex. In terms of biological role, catalyzes the formation of the signaling molecule cAMP in response to G-protein signaling. This Rattus norvegicus (Rat) protein is Adenylate cyclase type 4 (Adcy4).